Consider the following 236-residue polypeptide: MLFLSFLLVCLCEEVRMLNLMTTEVSATEFASIASKNMETDVSTSSDYLTGKSETTFSANSETWGKNVTEISIDSETYLNQSFMVTSTLAVETTDRSIGNNVNVTSSFPTVKGDETQNIETSFTVISASTFSDVSEKTPQGLSTKSTPKKTVQALWETDTVQVLEFTDTHEGDEEYFKDFLSSLVIWIGGISFIGAFVILIVILCNWYKKDKQRSLFWDEEKKPDVQMRRDVKTCR.

The N-terminal stretch at 1–17 (MLFLSFLLVCLCEEVRM) is a signal peptide. Residues N67, N80, and N103 are each glycosylated (N-linked (GlcNAc...) asparagine; by host). Residues 184–204 (LVIWIGGISFIGAFVILIVIL) traverse the membrane as a helical segment.

The protein localises to the membrane. The sequence is that of Glycoprotein U23 (U23) from Human herpesvirus 6A (strain Uganda-1102) (HHV-6 variant A).